Consider the following 212-residue polypeptide: Thymidylate kinase (212 aa).

11-18 (GPDGAGKS) serves as a coordination point for ATP.

This sequence belongs to the thymidylate kinase family.

The enzyme catalyses dTMP + ATP = dTDP + ADP. Functionally, phosphorylation of dTMP to form dTDP in both de novo and salvage pathways of dTTP synthesis. This is Thymidylate kinase from Streptococcus gordonii (strain Challis / ATCC 35105 / BCRC 15272 / CH1 / DL1 / V288).